Here is a 341-residue protein sequence, read N- to C-terminus: Phosphate acyltransferase (341 aa).

It belongs to the PlsX family. In terms of assembly, homodimer. Probably interacts with PlsY.

The protein resides in the cytoplasm. The enzyme catalyses a fatty acyl-[ACP] + phosphate = an acyl phosphate + holo-[ACP]. The protein operates within lipid metabolism; phospholipid metabolism. Functionally, catalyzes the reversible formation of acyl-phosphate (acyl-PO(4)) from acyl-[acyl-carrier-protein] (acyl-ACP). This enzyme utilizes acyl-ACP as fatty acyl donor, but not acyl-CoA. This chain is Phosphate acyltransferase, found in Nostoc sp. (strain PCC 7120 / SAG 25.82 / UTEX 2576).